A 368-amino-acid chain; its full sequence is Left-right determination factor 1 (368 aa).

The N-terminal stretch at 1 to 21 (MPFLWLCWALWALSLVSLREA) is a signal peptide. A propeptide spans 22-76 (LTGEQILGSLLQQLQLDQPPVLDKADVEGMVIPSHVRTQYVALLQHSHASRSRGK) (or 135). Asn-158 is a glycosylation site (N-linked (GlcNAc...) asparagine). Cystine bridges form between Cys-253–Cys-266, Cys-265–Cys-318, Cys-295–Cys-353, and Cys-299–Cys-355.

The protein belongs to the TGF-beta family. The processing of the protein may also occur at the second R-X-X-R site located at AA 132-135. Processing appears to be regulated in a cell-type specific manner.

It is found in the secreted. Required for left-right axis determination as a regulator of LEFTY2 and NODAL. The sequence is that of Left-right determination factor 1 (Lefty1) from Mus musculus (Mouse).